Consider the following 203-residue polypeptide: MSTRRRTLLKVIILGDSGVGKTSLMNQYVNNKFSQQYKATIGADFVTKELQIDDRLVTLQIWDTAGQERFQSLGVAFYRGADCCVLVYDVNHLKSFESLDNWHNEFLTRASPRDPMAFPFILLGNKVDIDGGNSRVVSEKKAREWCAEKGNIVYFETSAKEDYNVDDSFLCITKLALANERDQDIYFQPDTGSVPEQRGGCAC.

15–22 (GDSGVGKT) is a GTP binding site. The Effector region signature appears at 37–45 (YKATIGADF). GTP is bound by residues 63 to 67 (DTAGQ), 125 to 128 (NKVD), and 158 to 159 (SA). 2 S-geranylgeranyl cysteine lipidation sites follow: cysteine 201 and cysteine 203. Residue cysteine 203 is modified to Cysteine methyl ester.

It belongs to the small GTPase superfamily. Rab family. In terms of assembly, interacts with VPS39. As to expression, expressed in xylem cells of inflorescence stems.

The protein localises to the cell membrane. In terms of biological role, intracellular vesicle trafficking and protein transport. Functions in autophagy. Involved in xylem and tracheary element differentiation. In Arabidopsis thaliana (Mouse-ear cress), this protein is Ras-related protein RABG3b (RABG3B).